A 398-amino-acid chain; its full sequence is Putative F-box protein At3g17620 (398 aa).

The 45-residue stretch at 1–45 (MMSDLPRDLLEERLSRVPVKSLREARFTCKNWKTLSKKRSFTKKH) folds into the F-box domain.

This is Putative F-box protein At3g17620 from Arabidopsis thaliana (Mouse-ear cress).